The chain runs to 228 residues: Octanoyltransferase (228 aa).

A BPL/LPL catalytic domain is found at Glu31–Phe212. Substrate-binding positions include Arg76–His83, Ala143–Gly145, and Gly156–Ala158. Cys174 functions as the Acyl-thioester intermediate in the catalytic mechanism.

This sequence belongs to the LipB family.

Its subcellular location is the cytoplasm. The enzyme catalyses octanoyl-[ACP] + L-lysyl-[protein] = N(6)-octanoyl-L-lysyl-[protein] + holo-[ACP] + H(+). Its pathway is protein modification; protein lipoylation via endogenous pathway; protein N(6)-(lipoyl)lysine from octanoyl-[acyl-carrier-protein]: step 1/2. Functionally, catalyzes the transfer of endogenously produced octanoic acid from octanoyl-acyl-carrier-protein onto the lipoyl domains of lipoate-dependent enzymes. Lipoyl-ACP can also act as a substrate although octanoyl-ACP is likely to be the physiological substrate. The protein is Octanoyltransferase of Caldanaerobacter subterraneus subsp. tengcongensis (strain DSM 15242 / JCM 11007 / NBRC 100824 / MB4) (Thermoanaerobacter tengcongensis).